A 784-amino-acid polypeptide reads, in one-letter code: Ubiquitin carboxyl-terminal hydrolase 1 (784 aa).

Disordered stretches follow at residues 1–21 and 33–54; these read MPGV…SKKN and TKRA…EYRG. A compositionally biased stretch (polar residues) spans 7 to 16; sequence SESNGLSRGS. S16, S42, and S67 each carry phosphoserine. The region spanning 81–784 is the USP domain; that stretch reads VGLNNLGNTC…TPYLLFYKKL (704 aa). The active-site Nucleophile is the C90. Basic and acidic residues-rich tracts occupy residues 232-243 and 252-264; these read KVEEKSLQKEET and DSTR…KEQL. 2 disordered regions span residues 232–341 and 363–411; these read KVEE…KINW and TNQR…SSEA. The segment covering 389–407 has biased composition (polar residues); that stretch reads NTVNGSGPASPGSSVTPVD. A Phosphoserine modification is found at S475. H593 functions as the Proton acceptor in the catalytic mechanism. Residues 686-723 form a disordered region; sequence PEKVVGTPFTDSRNSETNDTNGTQESDRSKESSDQTGI. Residues 694–709 show a composition bias toward polar residues; it reads FTDSRNSETNDTNGTQ. S767 bears the Phosphoserine mark.

Belongs to the peptidase C19 family. Interacts with FANCD2 and PCNA. Interacts with WDR48. Interacts with ATAD5; the interaction regulates USP1-mediated PCNA deubiquitination. Autocatalytic cleavage of USP1 following UV irradiation inactivates it, leading to an increase in ubiquitinated PCNA, recruitment of POLH and translesion synthesis. In terms of processing, ubiquitinated by the CRL2(KLHDC2) complex following autocatalytic cleavage, leading to its degradation: the CRL2(KLHDC2) complex recognizes the diglycine (Gly-Gly) at the C-terminus.

It is found in the nucleus. It catalyses the reaction Thiol-dependent hydrolysis of ester, thioester, amide, peptide and isopeptide bonds formed by the C-terminal Gly of ubiquitin (a 76-residue protein attached to proteins as an intracellular targeting signal).. Its function is as follows. Negative regulator of DNA damage repair which specifically deubiquitinates monoubiquitinated FANCD2. Also involved in PCNA-mediated translesion synthesis (TLS) by deubiquitinating monoubiquitinated PCNA. Has almost no deubiquitinating activity by itself and requires the interaction with WDR48 to have a high activity. The polypeptide is Ubiquitin carboxyl-terminal hydrolase 1 (Rattus norvegicus (Rat)).